A 192-amino-acid chain; its full sequence is Anthranilate synthase component 2 (192 aa).

The region spanning 3-192 (NILLLDNIDS…LQRVIQWTKI (190 aa)) is the Glutamine amidotransferase type-1 domain. Position 57-59 (57-59 (GPG)) interacts with L-glutamine. Catalysis depends on Cys-84, which acts as the Nucleophile; for GATase activity. L-glutamine-binding positions include Gln-88 and 134 to 135 (SL). Catalysis depends on for GATase activity residues His-170 and Glu-172.

In terms of assembly, heterotetramer consisting of two non-identical subunits: a beta subunit (TrpG) and a large alpha subunit (TrpE).

The catalysed reaction is chorismate + L-glutamine = anthranilate + pyruvate + L-glutamate + H(+). It functions in the pathway amino-acid biosynthesis; L-tryptophan biosynthesis; L-tryptophan from chorismate: step 1/5. Functionally, part of a heterotetrameric complex that catalyzes the two-step biosynthesis of anthranilate, an intermediate in the biosynthesis of L-tryptophan. In the first step, the glutamine-binding beta subunit (TrpG) of anthranilate synthase (AS) provides the glutamine amidotransferase activity which generates ammonia as a substrate that, along with chorismate, is used in the second step, catalyzed by the large alpha subunit of AS (TrpE) to produce anthranilate. In the absence of TrpG, TrpE can synthesize anthranilate directly from chorismate and high concentrations of ammonia. The polypeptide is Anthranilate synthase component 2 (trpG) (Buchnera aphidicola subsp. Baizongia pistaciae (strain Bp)).